The sequence spans 512 residues: MEELQGYLEIDRSRQQDFLYPLLFQEYIYALAHDHSLNRSILYEPMENLGYDNKSSSLIVKRFITRMYQQNHLIISANDSNQNKFVGHNKNLDSQTISEGFAIIVEIPFSLRLVSSLEGLEGKGKEIVKSRNLRSIHSIFSFLEDKLSHLNYVSDILIPHPIHPEILVQVLRSWVQDAPSLHLLRLFLHEYRNWTSLITPKKSISIFSKENQRFFLFLYNFHICECESIFVFLRKQSSHLRSTSFRALLERTHFYGKMEHFVVVFRNNFQTILWLVKDPFMHYVRYQGKSFLASKGTPLLMNKWKYYLVNFWQYYFYLWSQPSRIHINQLSNHSLDFLGYLSSVRLNPSVVSSQMLENLYLMDIAIKKFDTIIPIIPLIGSLAKAKFCNVSGHPVSKPVRADSSDSDIIDRFGRICKNLSHYHSGSSKKKSLYRIKYILRLSCARTLARKHKSTVRAFLKRLGSELLEEFFTEEEQVLSLIFPRTSSPSRRLYRKQIWYLDIIRINDLANHE.

This sequence belongs to the intron maturase 2 family. MatK subfamily.

The protein resides in the plastid. Its subcellular location is the chloroplast. Its function is as follows. Usually encoded in the trnK tRNA gene intron. Probably assists in splicing its own and other chloroplast group II introns. The polypeptide is Maturase K (Platanus occidentalis (Sycamore)).